The sequence spans 140 residues: Lipoprotein MlpG (140 aa).

The first 17 residues, 1–17 (MKIINILFCLFLLMLNG), serve as a signal peptide directing secretion. Cys18 carries the N-palmitoyl cysteine lipid modification. Cys18 is lipidated: S-diacylglycerol cysteine. The interval 22–57 (DTNTKQTKSRQKRDLTQKEATQEKPKSKSKEDLLRE) is disordered. The span at 33–57 (KRDLTQKEATQEKPKSKSKEDLLRE) shows a compositional bias: basic and acidic residues.

This sequence belongs to the Multicopy lipoprotein (Mlp) family.

It is found in the cell outer membrane. An outer membrane protein that may participate in pathogenesis. Some human Lyme disease patients have antibodies against this protein. The Mlp proteins probably undergo intragenic recombination, generating new alleles. This chain is Lipoprotein MlpG, found in Borreliella burgdorferi (strain ATCC 35210 / DSM 4680 / CIP 102532 / B31) (Borrelia burgdorferi).